A 213-amino-acid polypeptide reads, in one-letter code: Ion-translocating oxidoreductase complex subunit E (213 aa).

6 helical membrane-spanning segments follow: residues 25 to 45 (TFGLVLGLCPTLAVTTSVENG), 46 to 66 (IGMAMGTLFVLVGSNMMVSAI), 77 to 97 (PVEIIVIATFVTIVDMVMEAF), 100 to 120 (DLYTSLGVFIPLIVVNCIVIG), 135 to 155 (IIDALGEGTGFLLVLILIGGI), and 181 to 201 (AMFMTMSPGAFLTIAVLMTIV).

This sequence belongs to the NqrDE/RnfAE family. As to quaternary structure, the Rnf complex is probably composed of eight subunits, including RnfA, RnfB, RnfC, RnfD, RnfE and RnfG.

Its subcellular location is the cell membrane. Its function is as follows. Part of a membrane-bound complex that couples electron transfer with translocation of ions across the membrane. Catalyzes Na(+) transport, most probably coupled to electron transfer from reduced ferredoxin to methanophenazine and heterodisulfide reductase. Involved in heterodisulfide reduction during methanogenesis from acetate. The sequence is that of Ion-translocating oxidoreductase complex subunit E from Methanosarcina acetivorans (strain ATCC 35395 / DSM 2834 / JCM 12185 / C2A).